Reading from the N-terminus, the 63-residue chain is Large ribosomal subunit protein bL28 (63 aa).

This sequence belongs to the bacterial ribosomal protein bL28 family.

This Desulfosudis oleivorans (strain DSM 6200 / JCM 39069 / Hxd3) (Desulfococcus oleovorans) protein is Large ribosomal subunit protein bL28.